Consider the following 344-residue polypeptide: 3-dehydroquinate synthase (344 aa).

Residues 60-65 (DGEEYK), 94-98 (GVISD), 118-119 (TT), K131, K140, and 158-161 (FLNT) each bind NAD(+). 3 residues coordinate Zn(2+): E173, H232, and H249.

The protein belongs to the sugar phosphate cyclases superfamily. Dehydroquinate synthase family. The cofactor is Co(2+). Zn(2+) is required as a cofactor. It depends on NAD(+) as a cofactor.

It is found in the cytoplasm. It carries out the reaction 7-phospho-2-dehydro-3-deoxy-D-arabino-heptonate = 3-dehydroquinate + phosphate. It functions in the pathway metabolic intermediate biosynthesis; chorismate biosynthesis; chorismate from D-erythrose 4-phosphate and phosphoenolpyruvate: step 2/7. Its function is as follows. Catalyzes the conversion of 3-deoxy-D-arabino-heptulosonate 7-phosphate (DAHP) to dehydroquinate (DHQ). This Campylobacter hominis (strain ATCC BAA-381 / DSM 21671 / CCUG 45161 / LMG 19568 / NCTC 13146 / CH001A) protein is 3-dehydroquinate synthase.